The sequence spans 604 residues: Serine/threonine-protein kinase A-Raf (604 aa).

Residues 19-91 (GTVKVYLPNK…DGEELIVEVL (73 aa)) form the RBD domain. The Phorbol-ester/DAG-type zinc finger occupies 98-144 (MHNFVRKTFFSLAFCDFCLKFLFHGFRCQTCGYKFHQHCSSKVPTVC). Zn(2+)-binding residues include His99, Cys112, Cys115, Cys125, Cys128, His133, Cys136, and Cys144. Phosphoserine occurs at positions 157 and 162. Disordered stretches follow at residues 178 to 222 (ELLT…HMVS) and 241 to 287 (TDAA…DEKK). Thr181 bears the Phosphothreonine mark. Phosphoserine is present on Ser186. Residues 210-222 (IRSTSTPNVHMVS) show a composition bias toward polar residues. Over residues 252–265 (PRGSPSPASVSSGR) the composition is skewed to low complexity. Phosphoserine occurs at positions 255 and 267. Over residues 272–287 (LPAEQRERKSLADEKK) the composition is skewed to basic and acidic residues. The Protein kinase domain occupies 308-568 (VQLLKRIGTG…PQILATIELL (261 aa)). Residues 314–322 (IGTGSFGTV) and Lys334 each bind ATP. Thr316 is subject to Phosphothreonine. Catalysis depends on Asp427, which acts as the Proton acceptor.

It belongs to the protein kinase superfamily. TKL Ser/Thr protein kinase family. RAF subfamily. In terms of assembly, interacts with TH1L/NELFD. Zn(2+) serves as cofactor. In terms of processing, dephosphorylation by the SHOC2-MRAS-PP1c (SMP) complex consisting of SHOC2, GTP-bound M-Ras/MRAS and the catalytic subunit of protein phosphatase 1 (PPP1CA, PPP1CB or PPP1CC); this relieves inactivation and stimulates kinase activity.

The enzyme catalyses L-seryl-[protein] + ATP = O-phospho-L-seryl-[protein] + ADP + H(+). It carries out the reaction L-threonyl-[protein] + ATP = O-phospho-L-threonyl-[protein] + ADP + H(+). Functionally, involved in the transduction of mitogenic signals from the cell membrane to the nucleus. May also regulate the TOR signaling cascade. Phosphorylates PFKFB2. The polypeptide is Serine/threonine-protein kinase A-Raf (Araf) (Rattus norvegicus (Rat)).